The chain runs to 1755 residues: Transposon Ty1-OR Gag-Pol polyprotein (1755 aa).

3 stretches are compositionally biased toward polar residues: residues 1-10, 48-60, and 127-152; these read MESQQLSNYP, TKAN…TPAS, and QSQF…GNTF. 3 disordered regions span residues 1–93, 126–173, and 352–421; these read MESQ…MMTQ, PQSQ…RPPP, and GSRN…SKST. Residues 153–165 show a composition bias toward low complexity; that stretch reads TDSSSADSDMTST. Positions 299-401 are RNA-binding; it reads NNGIHINNKV…NSKSKTARAH (103 aa). Low complexity predominate over residues 402–418; the sequence is NVSTSNNSPSTDNDSIS. S416 is subject to Phosphoserine. Catalysis depends on D461, which acts as the For protease activity; shared with dimeric partner. The segment at 583-640 is integrase-type zinc finger-like; that stretch reads NVHTSESTRKYPYPFIHRMLAHANAQTIRYSLKNNTITYFNESDVDWSSAIDYQCPDC. Residues 660 to 835 form the Integrase catalytic domain; sequence NSYEPFQYLH…AGLDISTLLP (176 aa). The Mg(2+) site is built by D671 and D736. Disordered stretches follow at residues 956–1087, 1092–1111, and 1130–1187; these read SKAV…ETEK, RSPS…NIVP, and DLPL…DNET. Positions 960–969 are enriched in low complexity; it reads SPTDSTPPST. The segment covering 1005–1015 has biased composition (polar residues); sequence STPQISNIEST. Over residues 1038–1053 the composition is skewed to basic and acidic residues; sequence ESSHASKSKDFRHSDS. Composition is skewed to polar residues over residues 1054–1082 and 1101–1111; these read YSEN…QISD and PENNSSHNIVP. Positions 1178 to 1212 match the Bipartite nuclear localization signal motif; it reads KKRSLEDNETEIKVSRDTWNTKNMRSLEPPRSKKR. The 139-residue stretch at 1338-1476 folds into the Reverse transcriptase Ty1/copia-type domain; it reads NNYYITQLDI…DILGLEIKYQ (139 aa). Mg(2+)-binding residues include D1346, D1427, D1428, D1610, E1652, and D1685. The RNase H Ty1/copia-type domain occupies 1610–1752; that stretch reads DASYGNQPYY…IKTFKLLTNK (143 aa).

As to quaternary structure, the capsid protein forms a homotrimer, from which the VLPs are assembled. The protease is a homodimer, whose active site consists of two apposed aspartic acid residues. Post-translationally, initially, virus-like particles (VLPs) are composed of the structural unprocessed proteins Gag and Gag-Pol, and also contain the host initiator methionine tRNA (tRNA(i)-Met) which serves as a primer for minus-strand DNA synthesis, and a dimer of genomic Ty RNA. Processing of the polyproteins occurs within the particle and proceeds by an ordered pathway, called maturation. First, the protease (PR) is released by autocatalytic cleavage of the Gag-Pol polyprotein yielding capsid protein p45 and a Pol-p154 precursor protein. This cleavage is a prerequisite for subsequent processing of Pol-p154 at the remaining sites to release the mature structural and catalytic proteins. Maturation takes place prior to the RT reaction and is required to produce transposition-competent VLPs.

It is found in the cytoplasm. The protein localises to the nucleus. It carries out the reaction DNA(n) + a 2'-deoxyribonucleoside 5'-triphosphate = DNA(n+1) + diphosphate. The catalysed reaction is Endonucleolytic cleavage to 5'-phosphomonoester.. In terms of biological role, capsid protein (CA) is the structural component of the virus-like particle (VLP), forming the shell that encapsulates the retrotransposons dimeric RNA genome. The particles are assembled from trimer-clustered units and there are holes in the capsid shells that allow for the diffusion of macromolecules. CA also has nucleocapsid-like chaperone activity, promoting primer tRNA(i)-Met annealing to the multipartite primer-binding site (PBS), dimerization of Ty1 RNA and initiation of reverse transcription. Its function is as follows. The aspartyl protease (PR) mediates the proteolytic cleavages of the Gag and Gag-Pol polyproteins after assembly of the VLP. Reverse transcriptase/ribonuclease H (RT) is a multifunctional enzyme that catalyzes the conversion of the retro-elements RNA genome into dsDNA within the VLP. The enzyme displays a DNA polymerase activity that can copy either DNA or RNA templates, and a ribonuclease H (RNase H) activity that cleaves the RNA strand of RNA-DNA heteroduplexes during plus-strand synthesis and hydrolyzes RNA primers. The conversion leads to a linear dsDNA copy of the retrotransposon that includes long terminal repeats (LTRs) at both ends. Functionally, integrase (IN) targets the VLP to the nucleus, where a subparticle preintegration complex (PIC) containing at least integrase and the newly synthesized dsDNA copy of the retrotransposon must transit the nuclear membrane. Once in the nucleus, integrase performs the integration of the dsDNA into the host genome. In Saccharomyces cerevisiae (strain ATCC 204508 / S288c) (Baker's yeast), this protein is Transposon Ty1-OR Gag-Pol polyprotein (TY1B-OR).